Here is a 126-residue protein sequence, read N- to C-terminus: Ribosome-binding factor A (126 aa).

It belongs to the RbfA family. Monomer. Binds 30S ribosomal subunits, but not 50S ribosomal subunits or 70S ribosomes.

The protein localises to the cytoplasm. Its function is as follows. One of several proteins that assist in the late maturation steps of the functional core of the 30S ribosomal subunit. Associates with free 30S ribosomal subunits (but not with 30S subunits that are part of 70S ribosomes or polysomes). Required for efficient processing of 16S rRNA. May interact with the 5'-terminal helix region of 16S rRNA. This chain is Ribosome-binding factor A, found in Thermosipho africanus (strain TCF52B).